Reading from the N-terminus, the 388-residue chain is S-adenosylmethionine synthase (388 aa).

H16 serves as a coordination point for ATP. Residue D18 coordinates Mg(2+). E44 is a binding site for K(+). L-methionine contacts are provided by E57 and Q100. The segment at 100–110 (QSPEIAQGVDR) is flexible loop. ATP-binding positions include 165-167 (DAK), 231-232 (KF), D240, 246-247 (RK), A263, and K267. D240 is a binding site for L-methionine. Residue K271 participates in L-methionine binding.

The protein belongs to the AdoMet synthase family. Homotetramer; dimer of dimers. Mg(2+) is required as a cofactor. Requires K(+) as cofactor.

The protein localises to the cytoplasm. It carries out the reaction L-methionine + ATP + H2O = S-adenosyl-L-methionine + phosphate + diphosphate. Its pathway is amino-acid biosynthesis; S-adenosyl-L-methionine biosynthesis; S-adenosyl-L-methionine from L-methionine: step 1/1. In terms of biological role, catalyzes the formation of S-adenosylmethionine (AdoMet) from methionine and ATP. The overall synthetic reaction is composed of two sequential steps, AdoMet formation and the subsequent tripolyphosphate hydrolysis which occurs prior to release of AdoMet from the enzyme. This is S-adenosylmethionine synthase from Psychrobacter arcticus (strain DSM 17307 / VKM B-2377 / 273-4).